The sequence spans 126 residues: Large ribosomal subunit protein uL22 (126 aa).

Belongs to the universal ribosomal protein uL22 family. Part of the 50S ribosomal subunit.

In terms of biological role, this protein binds specifically to 23S rRNA; its binding is stimulated by other ribosomal proteins, e.g. L4, L17, and L20. It is important during the early stages of 50S assembly. It makes multiple contacts with different domains of the 23S rRNA in the assembled 50S subunit and ribosome. Its function is as follows. The globular domain of the protein is located near the polypeptide exit tunnel on the outside of the subunit, while an extended beta-hairpin is found that lines the wall of the exit tunnel in the center of the 70S ribosome. The chain is Large ribosomal subunit protein uL22 from Caulobacter vibrioides (strain ATCC 19089 / CIP 103742 / CB 15) (Caulobacter crescentus).